The sequence spans 504 residues: Maturase K (504 aa).

It belongs to the intron maturase 2 family. MatK subfamily.

The protein localises to the plastid. Its subcellular location is the chloroplast. Its function is as follows. Usually encoded in the trnK tRNA gene intron. Probably assists in splicing its own and other chloroplast group II introns. The sequence is that of Maturase K from Quercus gemelliflora (Pasang hiris).